The sequence spans 379 residues: Flap endonuclease 1 (379 aa).

The N-domain stretch occupies residues 1 to 105 (MGIKGLTKLL…QELAKRYSKR (105 aa)). Asp-34 is a binding site for Mg(2+). Arg-71 serves as a coordination point for DNA. Mg(2+) is bound by residues Asp-87, Glu-159, Glu-161, Asp-180, and Asp-182. Positions 123–254 (AIEKLSKRTV…QTALKLIRQH (132 aa)) are I-domain. Glu-159 is a binding site for DNA. The DNA site is built by Gly-232 and Asp-234. Asp-234 contributes to the Mg(2+) binding site. A disordered region spans residues 331-379 (AKNKSSQGRLESFFKPTATTSAPLKRKETSDKTSKAAANKKTKAGGKKK). Residues 336–344 (SQGRLESFF) form an interaction with PCNA region. A compositionally biased stretch (basic and acidic residues) spans 355 to 364 (KRKETSDKTS). The span at 368 to 379 (ANKKTKAGGKKK) shows a compositional bias: basic residues.

The protein belongs to the XPG/RAD2 endonuclease family. FEN1 subfamily. In terms of assembly, interacts with PCNA. Three molecules of FEN1 bind to one PCNA trimer with each molecule binding to one PCNA monomer. PCNA stimulates the nuclease activity without altering cleavage specificity. Requires Mg(2+) as cofactor. In terms of processing, phosphorylated. Phosphorylation upon DNA damage induces relocalization to the nuclear plasma.

Its subcellular location is the nucleus. The protein localises to the nucleolus. It is found in the nucleoplasm. It localises to the mitochondrion. Functionally, structure-specific nuclease with 5'-flap endonuclease and 5'-3' exonuclease activities involved in DNA replication and repair. During DNA replication, cleaves the 5'-overhanging flap structure that is generated by displacement synthesis when DNA polymerase encounters the 5'-end of a downstream Okazaki fragment. It enters the flap from the 5'-end and then tracks to cleave the flap base, leaving a nick for ligation. Also involved in the long patch base excision repair (LP-BER) pathway, by cleaving within the apurinic/apyrimidinic (AP) site-terminated flap. Acts as a genome stabilization factor that prevents flaps from equilibrating into structures that lead to duplications and deletions. Also possesses 5'-3' exonuclease activity on nicked or gapped double-stranded DNA, and exhibits RNase H activity. Also involved in replication and repair of rDNA and in repairing mitochondrial DNA. This is Flap endonuclease 1 from Zea mays (Maize).